The following is a 185-amino-acid chain: Ribosome-recycling factor (185 aa).

Belongs to the RRF family.

It is found in the cytoplasm. In terms of biological role, responsible for the release of ribosomes from messenger RNA at the termination of protein biosynthesis. May increase the efficiency of translation by recycling ribosomes from one round of translation to another. The polypeptide is Ribosome-recycling factor (Campylobacter jejuni subsp. jejuni serotype O:2 (strain ATCC 700819 / NCTC 11168)).